We begin with the raw amino-acid sequence, 182 residues long: Large ribosomal subunit protein uL6 (182 aa).

The protein belongs to the universal ribosomal protein uL6 family. As to quaternary structure, part of the 50S ribosomal subunit.

In terms of biological role, this protein binds to the 23S rRNA, and is important in its secondary structure. It is located near the subunit interface in the base of the L7/L12 stalk, and near the tRNA binding site of the peptidyltransferase center. The chain is Large ribosomal subunit protein uL6 from Haloquadratum walsbyi (strain DSM 16790 / HBSQ001).